Here is a 306-residue protein sequence, read N- to C-terminus: Ribosomal protein L11 methyltransferase (306 aa).

Threonine 139, glycine 173, aspartate 195, and asparagine 242 together coordinate S-adenosyl-L-methionine.

It belongs to the methyltransferase superfamily. PrmA family.

It is found in the cytoplasm. It carries out the reaction L-lysyl-[protein] + 3 S-adenosyl-L-methionine = N(6),N(6),N(6)-trimethyl-L-lysyl-[protein] + 3 S-adenosyl-L-homocysteine + 3 H(+). Its function is as follows. Methylates ribosomal protein L11. This is Ribosomal protein L11 methyltransferase from Trichormus variabilis (strain ATCC 29413 / PCC 7937) (Anabaena variabilis).